Here is a 194-residue protein sequence, read N- to C-terminus: Peptidyl-tRNA hydrolase (194 aa).

Position 17 (Tyr17) interacts with tRNA. His22 serves as the catalytic Proton acceptor. TRNA is bound by residues Tyr68, Asn70, and Asn116.

The protein belongs to the PTH family. In terms of assembly, monomer.

It is found in the cytoplasm. It carries out the reaction an N-acyl-L-alpha-aminoacyl-tRNA + H2O = an N-acyl-L-amino acid + a tRNA + H(+). In terms of biological role, hydrolyzes ribosome-free peptidyl-tRNAs (with 1 or more amino acids incorporated), which drop off the ribosome during protein synthesis, or as a result of ribosome stalling. Functionally, catalyzes the release of premature peptidyl moieties from peptidyl-tRNA molecules trapped in stalled 50S ribosomal subunits, and thus maintains levels of free tRNAs and 50S ribosomes. This chain is Peptidyl-tRNA hydrolase, found in Pseudomonas paraeruginosa (strain DSM 24068 / PA7) (Pseudomonas aeruginosa (strain PA7)).